The chain runs to 893 residues: UPF0182 protein CLK_3152 (893 aa).

Transmembrane regions (helical) follow at residues 9 to 29, 49 to 69, 94 to 114, 154 to 174, 202 to 222, 246 to 266, and 273 to 293; these read IPLF…NFII, AIII…WMYY, LFFI…SSSY, VIIS…FILE, LAIV…IKIW, FYKI…LSIV, and VSIC…ASFL.

The protein belongs to the UPF0182 family.

Its subcellular location is the cell membrane. This Clostridium botulinum (strain Loch Maree / Type A3) protein is UPF0182 protein CLK_3152.